We begin with the raw amino-acid sequence, 701 residues long: SH3 domain-binding protein 1 (701 aa).

A compositionally biased stretch (basic residues) spans 1 to 10 (MMKRQLHRMR). 2 disordered regions span residues 1 to 23 (MMKR…RTPE) and 160 to 182 (SQAT…HSHT). The interaction with CGNL1 stretch occupies residues 1 to 275 (MMKRQLHRMR…TATHFPRVYG (275 aa)). The BAR domain maps to 17–262 (SLGRTPETAE…RENHGQADHS (246 aa)). Residues serine 175, serine 241, serine 262, and serine 264 each carry the phosphoserine modification. A Rho-GAP domain is found at 276 to 469 (VSLATHLQEL…ALIQSADTLF (194 aa)). An interaction with CD2AP region spans residues 470–701 (PGDINFNVSG…RPRSLASETN (232 aa)). The segment at 496 to 701 (SEELPSTAVP…RPRSLASETN (206 aa)) is disordered. Residues 508–522 (ATTPAPAPAPAPAPA) show a composition bias toward pro residues. Serine 544 and serine 550 each carry phosphoserine. Pro residues-rich tracts occupy residues 570–579 (PARPTMPPPQ) and 587–596 (PPAPPLPPGS). Position 601 is a phosphothreonine (threonine 601). Residues 616-625 (APTVPPPLPP) carry the SH3-binding motif. Pro residues-rich tracts occupy residues 618–630 (TVPP…PPQP) and 641–652 (SPSPASPGPASP). Threonine 626 carries the post-translational modification Phosphothreonine. Serine 653 is modified (phosphoserine). Positions 666-677 (GAATAEGGAPEA) are enriched in low complexity. Pro residues predominate over residues 682-692 (PTPPAIPPQPR).

In terms of assembly, interacts with RAC1. Interacts with the exocyst via EXOC4 and EXOC8; required for the localization of both SH3BP1 and the exocyst to the leading edge of migrating cells. Interacts with CD2AP and CGNL1; probably part of a complex at cell junctions. Interacts with CAPZA1; recruits CAPZA1 to forming cell junctions. May interact with AFDN. Interacts with PLXND1; they dissociate upon SEMA3E binding to PLXND1 allowing SH3BP1 to transduce downstream signal through RAC1 inactivation. Interacts with ABL1, GRB2 and SRC (via SH3 domain).

The protein localises to the cell projection. Its subcellular location is the cell junction. It localises to the tight junction. It is found in the adherens junction. The protein resides in the phagocytic cup. The protein localises to the nucleus. Its subcellular location is the cytoplasm. It localises to the cytosol. Its function is as follows. GTPase activating protein (GAP) which specifically converts GTP-bound Rho-type GTPases including RAC1 and CDC42 in their inactive GDP-bound form. By specifically inactivating RAC1 at the leading edge of migrating cells, it regulates the spatiotemporal organization of cell protrusions which is important for proper cell migration. Also negatively regulates CDC42 in the process of actin remodeling and the formation of epithelial cell junctions. Through its GAP activity toward RAC1 and/or CDC42 plays a specific role in phagocytosis of large particles. Specifically recruited by a PI3 kinase/PI3K-dependent mechanism to sites of large particles engagement, inactivates RAC1 and/or CDC42 allowing the reorganization of the underlying actin cytoskeleton required for engulfment. It also plays a role in angiogenesis and the process of repulsive guidance as part of a semaphorin-plexin signaling pathway. Following the binding of PLXND1 to extracellular SEMA3E it dissociates from PLXND1 and inactivates RAC1, inducing the intracellular reorganization of the actin cytoskeleton and the collapse of cells. The protein is SH3 domain-binding protein 1 of Homo sapiens (Human).